We begin with the raw amino-acid sequence, 208 residues long: Outer-membrane lipoprotein carrier protein (208 aa).

A signal peptide spans Met1–Ala21.

This sequence belongs to the LolA family. In terms of assembly, monomer.

It localises to the periplasm. In terms of biological role, participates in the translocation of lipoproteins from the inner membrane to the outer membrane. Only forms a complex with a lipoprotein if the residue after the N-terminal Cys is not an aspartate (The Asp acts as a targeting signal to indicate that the lipoprotein should stay in the inner membrane). The protein is Outer-membrane lipoprotein carrier protein of Pseudomonas paraeruginosa (strain DSM 24068 / PA7) (Pseudomonas aeruginosa (strain PA7)).